We begin with the raw amino-acid sequence, 942 residues long: PH and SEC7 domain-containing protein C11E3.11c (942 aa).

Polar residues predominate over residues 1–18; the sequence is MSRNASNAYLKNGNSTPS. Disordered stretches follow at residues 1–128 and 259–308; these read MSRN…TRLN and SRNL…ETTR. Residues 24–40 show a composition bias toward low complexity; it reads PSSLSQRSKTSTRSSKP. 4 stretches are compositionally biased toward polar residues: residues 50-60, 90-125, 271-284, and 292-305; these read WFKNESSSRHP, ASMSTNDLPSHPRSQSVMGFSSSTSQLTGTSNSSRT, YGNSRTPLRDSSNY, and NRQSSLSIPKSTSE. Residues 295–497 enclose the SEC7 domain; sequence SSLSIPKSTS…LSSYKSFASN (203 aa). Residues 681-804 enclose the PH domain; the sequence is PYIKQGILKF…WIDALNYWAA (124 aa).

The chain is PH and SEC7 domain-containing protein C11E3.11c from Schizosaccharomyces pombe (strain 972 / ATCC 24843) (Fission yeast).